The chain runs to 349 residues: Alanine racemase (349 aa).

The Proton acceptor; specific for D-alanine role is filled by lysine 35. Lysine 35 is modified (N6-(pyridoxal phosphate)lysine). Arginine 130 is a binding site for substrate. Catalysis depends on tyrosine 244, which acts as the Proton acceptor; specific for L-alanine. Methionine 292 contributes to the substrate binding site.

It belongs to the alanine racemase family. The cofactor is pyridoxal 5'-phosphate.

It catalyses the reaction L-alanine = D-alanine. It functions in the pathway amino-acid biosynthesis; D-alanine biosynthesis; D-alanine from L-alanine: step 1/1. Functionally, catalyzes the interconversion of L-alanine and D-alanine. May also act on other amino acids. The polypeptide is Alanine racemase (alr) (Dinoroseobacter shibae (strain DSM 16493 / NCIMB 14021 / DFL 12)).